Here is a 512-residue protein sequence, read N- to C-terminus: Inositol-3-phosphate synthase (512 aa).

NAD(+)-binding residues include glycine 72, glycine 73, asparagine 74, asparagine 75, aspartate 145, isoleucine 182, glutamine 192, arginine 195, threonine 232, glycine 233, asparagine 234, threonine 235, glycine 283, serine 284, aspartate 308, serine 311, asparagine 342, asparagine 343, aspartate 344, lysine 357, glycine 395, aspartate 396, aspartate 424, and serine 425.

This sequence belongs to the myo-inositol 1-phosphate synthase family. It depends on NAD(+) as a cofactor.

It is found in the cytoplasm. The protein localises to the cytosol. The protein resides in the nucleus. It carries out the reaction D-glucose 6-phosphate = 1D-myo-inositol 3-phosphate. The protein operates within polyol metabolism; myo-inositol biosynthesis; myo-inositol from D-glucose 6-phosphate: step 1/2. In terms of biological role, key enzyme in myo-inositol biosynthesis pathway that catalyzes the conversion of glucose 6-phosphate to 1-myo-inositol 1-phosphate in a NAD-dependent manner. The chain is Inositol-3-phosphate synthase from Mesembryanthemum crystallinum (Common ice plant).